The sequence spans 189 residues: Large ribosomal subunit protein bL9 (189 aa).

Belongs to the bacterial ribosomal protein bL9 family.

Functionally, binds to the 23S rRNA. The sequence is that of Large ribosomal subunit protein bL9 from Brucella abortus (strain S19).